The sequence spans 510 residues: Pyruvate kinase, cytosolic isozyme (510 aa).

Arg50 contributes to the substrate binding site. K(+) is bound by residues Asn52, Ser54, Asp84, and Thr85. 52-55 is a binding site for ATP; the sequence is NFSH. ATP is bound by residues Arg91 and Lys176. Glu242 serves as a coordination point for Mg(2+). Substrate is bound by residues Gly265, Asp266, and Thr298. Asp266 contacts Mg(2+).

Belongs to the pyruvate kinase family. As to quaternary structure, homotetramer. It depends on Mg(2+) as a cofactor. Requires K(+) as cofactor.

It localises to the cytoplasm. The enzyme catalyses pyruvate + ATP = phosphoenolpyruvate + ADP + H(+). The protein operates within carbohydrate degradation; glycolysis; pyruvate from D-glyceraldehyde 3-phosphate: step 5/5. The chain is Pyruvate kinase, cytosolic isozyme from Solanum tuberosum (Potato).